We begin with the raw amino-acid sequence, 402 residues long: Tyrosine--tRNA ligase (402 aa).

The short motif at 47–56 (PTAPDLHLGH) is the 'HIGH' region element. Residues 232–236 (KMSKS) carry the 'KMSKS' region motif. Lys235 serves as a coordination point for ATP. The S4 RNA-binding domain maps to 341–401 (VGILDVLKQI…GKKRFMKLNI (61 aa)).

The protein belongs to the class-I aminoacyl-tRNA synthetase family. TyrS type 2 subfamily. Homodimer.

It is found in the cytoplasm. The enzyme catalyses tRNA(Tyr) + L-tyrosine + ATP = L-tyrosyl-tRNA(Tyr) + AMP + diphosphate + H(+). Functionally, catalyzes the attachment of tyrosine to tRNA(Tyr) in a two-step reaction: tyrosine is first activated by ATP to form Tyr-AMP and then transferred to the acceptor end of tRNA(Tyr). The sequence is that of Tyrosine--tRNA ligase from Helicobacter pylori (strain ATCC 700392 / 26695) (Campylobacter pylori).